Here is a 255-residue protein sequence, read N- to C-terminus: Undecaprenyl-diphosphatase (255 aa).

Helical transmembrane passes span 1-21 (MDII…FLPI), 75-95 (IIIS…IVYQ), 96-116 (LFTV…FLIV), 174-194 (TEFS…FDIV), 203-223 (GDIS…LITI), and 234-254 (NFVP…MFFV).

Belongs to the UppP family.

It localises to the cell membrane. It carries out the reaction di-trans,octa-cis-undecaprenyl diphosphate + H2O = di-trans,octa-cis-undecaprenyl phosphate + phosphate + H(+). Functionally, catalyzes the dephosphorylation of undecaprenyl diphosphate (UPP). This Methanococcus aeolicus (strain ATCC BAA-1280 / DSM 17508 / OCM 812 / Nankai-3) protein is Undecaprenyl-diphosphatase.